Here is a 566-residue protein sequence, read N- to C-terminus: ATP-dependent RNA helicase DBP3 (566 aa).

The interval 1–139 (MSAGKKHARD…TTPNGSAQRN (139 aa)) is disordered. The segment covering 39-58 (DKKKKDKKDKKERKEKKEKK) has biased composition (basic residues). Residues 81-91 (SEPKPEKEKKE) show a composition bias toward basic and acidic residues. The segment covering 92 to 102 (KNNKKDKKDKK) has biased composition (basic residues). Residues 127-139 (AATTTPNGSAQRN) are compositionally biased toward polar residues. The Q motif signature appears at 182-209 (IHFSHLPTSTLTSKKPFASFTAPTPIQA). Residues 212–396 (WPFALSGRDV…EGFMIDPVKA (185 aa)) form the Helicase ATP-binding domain. 225 to 232 (AETGSGKT) serves as a coordination point for ATP. The DEAD box motif lies at 342–345 (DEAD). Residues 433-566 (GKEQRLLELL…TEHDKSHSGS (134 aa)) form the Helicase C-terminal domain.

It belongs to the DEAD box helicase family. DDX5/DBP2 subfamily.

The protein resides in the nucleus. It is found in the nucleolus. It carries out the reaction ATP + H2O = ADP + phosphate + H(+). Functionally, ATP-dependent RNA helicase required for 60S ribosomal subunit synthesis. Involved in efficient pre-rRNA processing, predominantly at site A3, which is necessary for the normal formation of 25S and 5.8S rRNAs. This is ATP-dependent RNA helicase DBP3 (DBP3) from Chaetomium globosum (strain ATCC 6205 / CBS 148.51 / DSM 1962 / NBRC 6347 / NRRL 1970) (Soil fungus).